The primary structure comprises 122 residues: Large ribosomal subunit protein uL14c (122 aa).

This sequence belongs to the universal ribosomal protein uL14 family. Part of the 50S ribosomal subunit.

Its subcellular location is the plastid. The protein localises to the chloroplast. Its function is as follows. Binds to 23S rRNA. This Citrus sinensis (Sweet orange) protein is Large ribosomal subunit protein uL14c.